We begin with the raw amino-acid sequence, 384 residues long: Putative glutamate--cysteine ligase 2-1 (384 aa).

The protein belongs to the glutamate--cysteine ligase type 2 family. YbdK subfamily.

It catalyses the reaction L-cysteine + L-glutamate + ATP = gamma-L-glutamyl-L-cysteine + ADP + phosphate + H(+). Functionally, ATP-dependent carboxylate-amine ligase which exhibits weak glutamate--cysteine ligase activity. The polypeptide is Putative glutamate--cysteine ligase 2-1 (Paenarthrobacter aurescens (strain TC1)).